The following is a 214-amino-acid chain: Probable adenylyl-sulfate kinase (214 aa).

Position 13–20 (13–20) interacts with ATP; the sequence is GLSGAGKT. The active-site Phosphoserine intermediate is the Ser87. The tract at residues 174-199 is disordered; it reads WNRTNTFPLKSRPNPPHRHKSKSSRA.

Belongs to the APS kinase family.

The enzyme catalyses adenosine 5'-phosphosulfate + ATP = 3'-phosphoadenylyl sulfate + ADP + H(+). It functions in the pathway sulfur metabolism; hydrogen sulfide biosynthesis; sulfite from sulfate: step 2/3. Functionally, catalyzes the synthesis of activated sulfate. The chain is Probable adenylyl-sulfate kinase from Pseudomonas aeruginosa.